The sequence spans 712 residues: Ribosomal RNA large subunit methyltransferase K/L (712 aa).

One can recognise a THUMP domain in the interval 46-157; that stretch reads GAYQALLHSR…RENMVVSLDL (112 aa).

It belongs to the methyltransferase superfamily. RlmKL family.

The protein resides in the cytoplasm. It carries out the reaction guanosine(2445) in 23S rRNA + S-adenosyl-L-methionine = N(2)-methylguanosine(2445) in 23S rRNA + S-adenosyl-L-homocysteine + H(+). The enzyme catalyses guanosine(2069) in 23S rRNA + S-adenosyl-L-methionine = N(2)-methylguanosine(2069) in 23S rRNA + S-adenosyl-L-homocysteine + H(+). In terms of biological role, specifically methylates the guanine in position 2445 (m2G2445) and the guanine in position 2069 (m7G2069) of 23S rRNA. The polypeptide is Ribosomal RNA large subunit methyltransferase K/L (Actinobacillus pleuropneumoniae serotype 7 (strain AP76)).